The primary structure comprises 469 residues: MTEQPTTANQMWGGRFAAGPDAIMEAINASIGFDQRLYAQDIRGSRAHAAMLAAQGIISTSDAEAIGEGLLTVLSEIEKGDFPFSTALEDIHMNVESRLKEIIGEPAGRLHTARSRNDQVATDFRLWVRDQCDAAIAGLDALIRAALSQAEKGADWVMPGFTHLQTAQPVTWGHHMMAYVEMFGRDLSRFRDARKRMNESPLGAAALAGTGFPIDREATARALGFERPMANSLDAVSDRDFALEYLSSAAICAVHLSRLAEELVIWSSAQFRFVTMSDRFSTGSSIMPQKKNPDAAELIRAKIGRILGAAVALFVVMKGLPLAYSKDMQEDKEQVFDASDNLMLALAAMTGMLTDLTANRERLEAAAGSGFSTATDLADWLVREAGLPFRDAHHATGALVAMAEQAGIDLPDLTLEQMQSVNPAITADVYGVLGVHNSVASRMSYGGTAPAQVRAQIARWKEKLEEKSA.

Belongs to the lyase 1 family. Argininosuccinate lyase subfamily.

The protein localises to the cytoplasm. It catalyses the reaction 2-(N(omega)-L-arginino)succinate = fumarate + L-arginine. The protein operates within amino-acid biosynthesis; L-arginine biosynthesis; L-arginine from L-ornithine and carbamoyl phosphate: step 3/3. The protein is Argininosuccinate lyase of Paracoccus denitrificans (strain Pd 1222).